We begin with the raw amino-acid sequence, 471 residues long: D-hydantoinase (471 aa).

Residues His58, His60, and Lys150 each coordinate Zn(2+). Lys150 bears the N6-carboxylysine mark. Tyr155 contributes to the substrate binding site. Zn(2+) is bound by residues His183 and His239. Residue Ser288 coordinates substrate. Asp315 is a Zn(2+) binding site. Asn337 is a substrate binding site.

Belongs to the metallo-dependent hydrolases superfamily. Hydantoinase/dihydropyrimidinase family. As to quaternary structure, homotetramer. Zn(2+) is required as a cofactor. Requires Ni(2+) as cofactor. It depends on Co(2+) as a cofactor. Mn(2+) serves as cofactor. In terms of processing, carboxylation allows a single lysine to coordinate two zinc ions.

With respect to regulation, completely inhibited by p-chloromercuribenzoate and partially inhibited by metal chelating agents. In terms of biological role, catalyzes the stereospecific hydrolysis of the cyclic amide bond of D-hydantoin. Has no activity on dihydropyrimidines. The polypeptide is D-hydantoinase (Geobacillus stearothermophilus (Bacillus stearothermophilus)).